Here is a 400-residue protein sequence, read N- to C-terminus: Elongation factor Tu (400 aa).

In terms of domain architecture, tr-type G spans 10–208 (KPHVNVGTIG…AMDNYIPDPQ (199 aa)). Residues 19–26 (GHIDHGKS) are G1. Residue 19–26 (GHIDHGKS) coordinates GTP. Position 26 (Ser26) interacts with Mg(2+). The G2 stretch occupies residues 60 to 64 (GITIN). The segment at 81–84 (DCPG) is G3. GTP-binding positions include 81-85 (DCPGH) and 136-139 (NKTD). The interval 136–139 (NKTD) is G4. The G5 stretch occupies residues 174 to 176 (SAL).

The protein belongs to the TRAFAC class translation factor GTPase superfamily. Classic translation factor GTPase family. EF-Tu/EF-1A subfamily. In terms of assembly, monomer.

It is found in the cytoplasm. The enzyme catalyses GTP + H2O = GDP + phosphate + H(+). Its function is as follows. GTP hydrolase that promotes the GTP-dependent binding of aminoacyl-tRNA to the A-site of ribosomes during protein biosynthesis. In Thermotoga maritima (strain ATCC 43589 / DSM 3109 / JCM 10099 / NBRC 100826 / MSB8), this protein is Elongation factor Tu.